Reading from the N-terminus, the 532-residue chain is Deoxyribodipyrimidine photo-lyase (532 aa).

Residues 1 to 57 (MDSKKRSHSTGGEAENMESQESKAKRKPLQKHQFSKSNVVQKEEKDKTEGEEKGAEG) are disordered. A compositionally biased stretch (basic residues) spans 24 to 34 (AKRKPLQKHQF). A compositionally biased stretch (basic and acidic residues) spans 41–55 (QKEEKDKTEGEEKGA). Residues 97-229 (QAFVYWMSRD…QVDAHNIVPC (133 aa)) enclose the Photolyase/cryptochrome alpha/beta domain. Arg322 provides a ligand contact to DNA. Interaction with DNA stretches follow at residues 368–376 (EAVVRRELA) and 442–443 (GF). 468 to 470 (YLN) contributes to the FAD binding site.

This sequence belongs to the DNA photolyase class-2 family. Requires FAD as cofactor.

It catalyses the reaction cyclobutadipyrimidine (in DNA) = 2 pyrimidine residues (in DNA).. Functionally, involved in repair of UV radiation-induced DNA damage. Catalyzes the light-dependent monomerization (300-600 nm) of cyclobutyl pyrimidine dimers (in cis-syn configuration), which are formed between adjacent bases on the same DNA strand upon exposure to ultraviolet radiation. This is Deoxyribodipyrimidine photo-lyase (PHR) from Potorous tridactylus (Potoroo).